We begin with the raw amino-acid sequence, 273 residues long: Urease accessory protein UreD (273 aa).

Belongs to the UreD family. UreD, UreF and UreG form a complex that acts as a GTP-hydrolysis-dependent molecular chaperone, activating the urease apoprotein by helping to assemble the nickel containing metallocenter of UreC. The UreE protein probably delivers the nickel.

The protein localises to the cytoplasm. In terms of biological role, required for maturation of urease via the functional incorporation of the urease nickel metallocenter. The polypeptide is Urease accessory protein UreD (Rhizobium rhizogenes (strain K84 / ATCC BAA-868) (Agrobacterium radiobacter)).